A 340-amino-acid chain; its full sequence is DNA-directed RNA polymerase subunit alpha (340 aa).

Residues 1 to 236 (MLSLSKNWNT…EQLQLFISFE (236 aa)) are alpha N-terminal domain (alpha-NTD). The segment at 251–340 (FSPYLLKRVD…LSKRYEDSYN (90 aa)) is alpha C-terminal domain (alpha-CTD).

The protein belongs to the RNA polymerase alpha chain family. In terms of assembly, homodimer. The RNAP catalytic core consists of 2 alpha, 1 beta, 1 beta' and 1 omega subunit. When a sigma factor is associated with the core the holoenzyme is formed, which can initiate transcription.

It carries out the reaction RNA(n) + a ribonucleoside 5'-triphosphate = RNA(n+1) + diphosphate. In terms of biological role, DNA-dependent RNA polymerase catalyzes the transcription of DNA into RNA using the four ribonucleoside triphosphates as substrates. This is DNA-directed RNA polymerase subunit alpha from Rickettsia akari (strain Hartford).